The primary structure comprises 49 residues: Large ribosomal subunit protein eL40 (49 aa).

This sequence belongs to the eukaryotic ribosomal protein eL40 family.

This Halorubrum lacusprofundi (strain ATCC 49239 / DSM 5036 / JCM 8891 / ACAM 34) protein is Large ribosomal subunit protein eL40.